The sequence spans 311 residues: Ribonuclease HIII (311 aa).

The region spanning 95–311 (MSIVGSDEVG…NTEKAFRLLK (217 aa)) is the RNase H type-2 domain. A divalent metal cation is bound by residues D101, E102, and D206.

It belongs to the RNase HII family. RnhC subfamily. The cofactor is Mn(2+). Requires Mg(2+) as cofactor.

The protein resides in the cytoplasm. It catalyses the reaction Endonucleolytic cleavage to 5'-phosphomonoester.. Its function is as follows. Endonuclease that specifically degrades the RNA of RNA-DNA hybrids. This Bacillus cereus (strain AH187) protein is Ribonuclease HIII.